A 249-amino-acid chain; its full sequence is Triosephosphate isomerase (249 aa).

Residues asparagine 12 and lysine 14 each coordinate substrate. Lysine 14 is subject to N6-acetyllysine. The residue at position 68 (tyrosine 68) is a 3'-nitrotyrosine. At serine 80 the chain carries Phosphoserine. The active-site Electrophile is histidine 96. Serine 106 is modified (phosphoserine). Lysine 142 is covalently cross-linked (Glycyl lysine isopeptide (Lys-Gly) (interchain with G-Cter in SUMO1)). Position 149 is an N6-succinyllysine (lysine 149). Lysine 156 is modified (N6-acetyllysine; alternate). Lysine 156 carries the N6-succinyllysine; alternate modification. Serine 159 carries the post-translational modification Phosphoserine. The Proton acceptor role is filled by glutamate 166. A Phosphothreonine modification is found at threonine 173. Position 194 is an N6-acetyllysine; alternate (lysine 194). Lysine 194 is subject to N6-succinyllysine; alternate. Lysine 194 is subject to N6-methyllysine; alternate. At serine 198 the chain carries Phosphoserine. Tyrosine 209 is subject to 3'-nitrotyrosine. A Phosphoserine modification is found at serine 212. A Phosphothreonine modification is found at threonine 214. Serine 223 carries the post-translational modification Phosphoserine. Position 238 is an N6-acetyllysine (lysine 238).

The protein belongs to the triosephosphate isomerase family. As to quaternary structure, homodimer.

The protein resides in the cytoplasm. The enzyme catalyses dihydroxyacetone phosphate = methylglyoxal + phosphate. It catalyses the reaction D-glyceraldehyde 3-phosphate = dihydroxyacetone phosphate. The protein operates within carbohydrate degradation; glycolysis; D-glyceraldehyde 3-phosphate from glycerone phosphate: step 1/1. It functions in the pathway carbohydrate biosynthesis; gluconeogenesis. Functionally, triosephosphate isomerase is an extremely efficient metabolic enzyme that catalyzes the interconversion between dihydroxyacetone phosphate (DHAP) and D-glyceraldehyde-3-phosphate (G3P) in glycolysis and gluconeogenesis. Its function is as follows. It is also responsible for the non-negligible production of methylglyoxal a reactive cytotoxic side-product that modifies and can alter proteins, DNA and lipids. This is Triosephosphate isomerase (TPI1) from Pongo abelii (Sumatran orangutan).